A 296-amino-acid chain; its full sequence is Claudin-23 (296 aa).

Topologically, residues 1–2 are cytoplasmic; sequence MR. Residues 3–23 traverse the membrane as a helical segment; it reads TPVVMTLGMVLTPCGLLLNLV. Residues 24–81 lie on the Extracellular side of the membrane; sequence STLAPGWRLVKGFLDQPVDVVLYQGLWDICREQSSRERECGQPDEWNYFQTQPVQVAR. The chain crosses the membrane as a helical span at residues 82–102; the sequence is GLMITSLATTALGLLLASLGV. Residues 103-111 are Cytoplasmic-facing; it reads RCWQDEPHY. A helical transmembrane segment spans residues 112 to 132; sequence GLAGLSGVVFFVAGLFSLIPV. The Extracellular segment spans residues 133–160; it reads SWYNHFLSDPDVLAAPSSPVTVQVSYSL. Residues 161–181 traverse the membrane as a helical segment; the sequence is VLGYLGSCLLLLGGFSLALSF. The Cytoplasmic portion of the chain corresponds to 182 to 296; sequence APWCEERCRR…QNSLPCDSDL (115 aa). Residues 224–296 form a disordered region; that stretch reads YSDGQHRPPP…QNSLPCDSDL (73 aa). Over residues 273–284 the composition is skewed to low complexity; the sequence is TSQGGSSSRSTR. The segment covering 285 to 296 has biased composition (polar residues); it reads PCQNSLPCDSDL.

This sequence belongs to the claudin family.

The protein localises to the cell junction. It is found in the tight junction. Its subcellular location is the cell membrane. Plays a major role in tight junction-specific obliteration of the intercellular space, through calcium-independent cell-adhesion activity. This Mus musculus (Mouse) protein is Claudin-23 (Cldn23).